The primary structure comprises 122 residues: Large ribosomal subunit protein uL14c (122 aa).

It belongs to the universal ribosomal protein uL14 family. Part of the 50S ribosomal subunit.

Its subcellular location is the plastid. It is found in the chloroplast. Binds to 23S rRNA. The sequence is that of Large ribosomal subunit protein uL14c from Illicium oligandrum (Star anise).